We begin with the raw amino-acid sequence, 580 residues long: Guanine nucleotide-binding protein alpha-4 subunit (580 aa).

Residues 1 to 10 are compositionally biased toward polar residues; that stretch reads MSPSVSSPQL. A disordered region spans residues 1-28; that stretch reads MSPSVSSPQLRHTKSNRAISRIDRTDPL. Residues 93–579 form the G-alpha domain; it reads RVYKMVLLGQ…RENLKLTGLV (487 aa). Residues 96–109 are G1 motif; it reads KMVLLGQAGAGKTT. 101–108 contacts GTP; sequence GQAGAGKT. Disordered regions lie at residues 160–196 and 302–325; these read KSSELSRLESSTSASTSTSASASSPKHVDTESQPNDA and GRAAAARRETDGGDSQSESEKDNS. Residues 167 to 183 are compositionally biased toward low complexity; it reads LESSTSASTSTSASASS. The interval 387 to 395 is G2 motif; the sequence is DILHSRVRT. GTP is bound by residues 389-395, 415-419, 484-487, and A551; these read LHSRVRT, DVGGS, and NKID. A Mg(2+)-binding site is contributed by T395. The interval 411-420 is G3 motif; sequence YRIYDVGGSR. Positions 480–487 are G4 motif; sequence ILFLNKID. The tract at residues 549–554 is G5 motif; it reads TVATST.

It belongs to the G-alpha family. In terms of assembly, g proteins are composed of 3 units; alpha, beta and gamma. The alpha chain contains the guanine nucleotide binding site.

Guanine nucleotide-binding proteins (G proteins) are involved as modulators or transducers in various transmembrane signaling systems. This Mycosarcoma maydis (Corn smut fungus) protein is Guanine nucleotide-binding protein alpha-4 subunit (GPA4).